A 205-amino-acid chain; its full sequence is MKSKNNKFIAVSISFILGIALGIYVESTYYFTNIINSKSFSLSNAQINYYSISELSRSNVSTCFTPPAGCTKFIVQQIEKAEESIYMQAYGMSDSLITTALINAQMRGVKVRILLDRSNLKQKFSKLYELQQAKIDVGIDTVPGIAHNKVIIIDKKKVITGSFNFTVSADKRNAENVILIEDRKLAESYLQNWFSRKTTSNAVHF.

Positions 1–22 (MKSKNNKFIAVSISFILGIALG) are cleaved as a signal peptide. The region spanning 142 to 169 (VPGIAHNKVIIIDKKKVITGSFNFTVSA) is the PLD phosphodiesterase domain. Active-site residues include H147, K149, and D154.

This sequence belongs to the phospholipase D family. Homodimer.

The protein localises to the secreted. The enzyme catalyses a 1,2-diacyl-sn-glycero-3-phosphocholine + H2O = a 1,2-diacyl-sn-glycero-3-phosphate + choline + H(+). Functionally, could be a virulence factor. This chain is Phospholipase D (pld), found in Rickettsia prowazekii (strain Madrid E).